Reading from the N-terminus, the 205-residue chain is RNA pyrophosphohydrolase (205 aa).

Residues 6–149 (GFRPNVGIVL…KRGVYARALR (144 aa)) enclose the Nudix hydrolase domain. Positions 38 to 59 (GGMNTDETPVEAMYRELREETG) match the Nudix box motif. The interval 177 to 205 (PGSSAAGHDSPRKRPRKRSGARPMRINND) is disordered. Positions 187–196 (PRKRPRKRSG) are enriched in basic residues.

The protein belongs to the Nudix hydrolase family. RppH subfamily. The cofactor is a divalent metal cation.

In terms of biological role, accelerates the degradation of transcripts by removing pyrophosphate from the 5'-end of triphosphorylated RNA, leading to a more labile monophosphorylated state that can stimulate subsequent ribonuclease cleavage. The protein is RNA pyrophosphohydrolase of Xanthomonas oryzae pv. oryzae (strain MAFF 311018).